Consider the following 546-residue polypeptide: ATP synthase subunit alpha (546 aa).

173–180 lines the ATP pocket; sequence GDRQTGKT. The tract at residues 520–546 is disordered; sequence VDKKTAPKSVTPVDQEQIKAGKAQEKK. Positions 535–546 are enriched in basic and acidic residues; it reads EQIKAGKAQEKK.

The protein belongs to the ATPase alpha/beta chains family. F-type ATPases have 2 components, CF(1) - the catalytic core - and CF(0) - the membrane proton channel. CF(1) has five subunits: alpha(3), beta(3), gamma(1), delta(1), epsilon(1). CF(0) has three main subunits: a(1), b(2) and c(9-12). The alpha and beta chains form an alternating ring which encloses part of the gamma chain. CF(1) is attached to CF(0) by a central stalk formed by the gamma and epsilon chains, while a peripheral stalk is formed by the delta and b chains.

The protein resides in the cell membrane. It catalyses the reaction ATP + H2O + 4 H(+)(in) = ADP + phosphate + 5 H(+)(out). Functionally, produces ATP from ADP in the presence of a proton gradient across the membrane. The alpha chain is a regulatory subunit. In Bifidobacterium animalis subsp. lactis (strain AD011), this protein is ATP synthase subunit alpha.